The sequence spans 348 residues: Lipopolysaccharide heptosyltransferase 2 (348 aa).

This sequence belongs to the glycosyltransferase 9 family.

The enzyme catalyses an L-alpha-D-Hep-(1-&gt;5)-[alpha-Kdo-(2-&gt;4)]-alpha-Kdo-(2-&gt;6)-lipid A + ADP-L-glycero-beta-D-manno-heptose = an L-alpha-D-Hep-(1-&gt;3)-L-alpha-D-Hep-(1-&gt;5)-[alpha-Kdo-(2-&gt;4)]-alpha-Kdo-(2-&gt;6)-lipid A + ADP + H(+). The protein operates within bacterial outer membrane biogenesis; LPS core biosynthesis. In terms of biological role, glycosyltransferase involved in the biosynthesis of the core oligosaccharide region of lipopolysaccharide (LPS). Catalyzes the addition of the second heptose unit to the heptosyl-Kdo2-lipid A module. This Salmonella typhimurium (strain LT2 / SGSC1412 / ATCC 700720) protein is Lipopolysaccharide heptosyltransferase 2.